The following is a 226-amino-acid chain: ATP synthase F(0) complex subunit a (226 aa).

Helical transmembrane passes span 14–34 (ILGISILPLIMIFPCLLFSAP), 68–88 (WTLMLITLIMFIASTNLLGLL), 97–117 (QLSMNMGMAVPLWLGTVLMGF), 138–158 (IPMLIIIETISLFIQPVALAV), 164–184 (ITAGHLLIHLIGSATLALSSI), and 193–213 (FTILFLLTILEIAVALIQAYV).

It belongs to the ATPase A chain family. As to quaternary structure, component of the ATP synthase complex composed at least of ATP5F1A/subunit alpha, ATP5F1B/subunit beta, ATP5MC1/subunit c (homooctomer), MT-ATP6/subunit a, MT-ATP8/subunit 8, ATP5ME/subunit e, ATP5MF/subunit f, ATP5MG/subunit g, ATP5MK/subunit k, ATP5MJ/subunit j, ATP5F1C/subunit gamma, ATP5F1D/subunit delta, ATP5F1E/subunit epsilon, ATP5PF/subunit F6, ATP5PB/subunit b, ATP5PD/subunit d, ATP5PO/subunit OSCP. ATP synthase complex consists of a soluble F(1) head domain (subunits alpha(3) and beta(3)) - the catalytic core - and a membrane F(0) domain - the membrane proton channel (subunits c, a, 8, e, f, g, k and j). These two domains are linked by a central stalk (subunits gamma, delta, and epsilon) rotating inside the F1 region and a stationary peripheral stalk (subunits F6, b, d, and OSCP). Interacts with DNAJC30; interaction is direct.

It localises to the mitochondrion inner membrane. It catalyses the reaction H(+)(in) = H(+)(out). In terms of biological role, subunit a, of the mitochondrial membrane ATP synthase complex (F(1)F(0) ATP synthase or Complex V) that produces ATP from ADP in the presence of a proton gradient across the membrane which is generated by electron transport complexes of the respiratory chain. ATP synthase complex consist of a soluble F(1) head domain - the catalytic core - and a membrane F(1) domain - the membrane proton channel. These two domains are linked by a central stalk rotating inside the F(1) region and a stationary peripheral stalk. During catalysis, ATP synthesis in the catalytic domain of F(1) is coupled via a rotary mechanism of the central stalk subunits to proton translocation. With the subunit c (ATP5MC1), forms the proton-conducting channel in the F(0) domain, that contains two crucial half-channels (inlet and outlet) that facilitate proton movement from the mitochondrial intermembrane space (IMS) into the matrix. Protons are taken up via the inlet half-channel and released through the outlet half-channel, following a Grotthuss mechanism. This is ATP synthase F(0) complex subunit a from Tachyglossus aculeatus aculeatus (Southeast Australian short-beaked echidna).